A 555-amino-acid chain; its full sequence is Hdr-like menaquinol oxidoreductase iron-sulfur subunit 2 (555 aa).

2 consecutive 4Fe-4S ferredoxin-type domains span residues Arg82–Lys111 and Lys151–Val180. Cys91, Cys94, Cys97, Cys101, Cys160, Cys163, Cys166, and Cys170 together coordinate [4Fe-4S] cluster.

Consists of five subunits: an integral membrane subunit, a cytochrome b-like subunit, a cytochrome c subunit and two iron-sulfur subunits. [4Fe-4S] cluster serves as cofactor.

The protein resides in the cell membrane. Functionally, has menaquinol-oxidizing activity. HmeC and HmeD subunits may together mediate electron transfer from menaquinol to an unidentified electron acceptor on the cytoplasmic side of the membrane. The sequence is that of Hdr-like menaquinol oxidoreductase iron-sulfur subunit 2 (hmeD) from Archaeoglobus fulgidus (strain ATCC 49558 / DSM 4304 / JCM 9628 / NBRC 100126 / VC-16).